A 247-amino-acid chain; its full sequence is Segregation and condensation protein A (247 aa).

The protein belongs to the ScpA family. Component of a cohesin-like complex composed of ScpA, ScpB and the Smc homodimer, in which ScpA and ScpB bind to the head domain of Smc. The presence of the three proteins is required for the association of the complex with DNA.

It localises to the cytoplasm. Its function is as follows. Participates in chromosomal partition during cell division. May act via the formation of a condensin-like complex containing Smc and ScpB that pull DNA away from mid-cell into both cell halves. The polypeptide is Segregation and condensation protein A (Bacillus cereus (strain AH187)).